Consider the following 239-residue polypeptide: O-antigen export system ATP-binding protein RfbE (239 aa).

The ABC transporter domain maps to Val-28 to Leu-239. Gly-66–Ser-73 provides a ligand contact to ATP.

This sequence belongs to the ABC transporter superfamily.

It is found in the cell inner membrane. Its function is as follows. May form an ATP-driven O-antigen export apparatus, in association with RfbD. This chain is O-antigen export system ATP-binding protein RfbE (rfbE), found in Yersinia enterocolitica.